Here is a 407-residue protein sequence, read N- to C-terminus: Phosphopentomutase (407 aa).

Residues D11, D305, H310, D346, H347, and H358 each coordinate Mn(2+).

It belongs to the phosphopentomutase family. Mn(2+) is required as a cofactor.

It is found in the cytoplasm. It catalyses the reaction 2-deoxy-alpha-D-ribose 1-phosphate = 2-deoxy-D-ribose 5-phosphate. The enzyme catalyses alpha-D-ribose 1-phosphate = D-ribose 5-phosphate. It functions in the pathway carbohydrate degradation; 2-deoxy-D-ribose 1-phosphate degradation; D-glyceraldehyde 3-phosphate and acetaldehyde from 2-deoxy-alpha-D-ribose 1-phosphate: step 1/2. Its function is as follows. Isomerase that catalyzes the conversion of deoxy-ribose 1-phosphate (dRib-1-P) and ribose 1-phosphate (Rib-1-P) to deoxy-ribose 5-phosphate (dRib-5-P) and ribose 5-phosphate (Rib-5-P), respectively. This chain is Phosphopentomutase, found in Legionella pneumophila (strain Paris).